We begin with the raw amino-acid sequence, 321 residues long: 2,3,4,5-tetrahydropyridine-2,6-dicarboxylate N-succinyltransferase (321 aa).

2 residues coordinate Mg(2+): Asp-166 and Glu-183. Residue Glu-199 is the Acyl-anhydride intermediate of the active site. Residues Arg-201, Gly-216, Ser-219, Ala-242, 257 to 258 (EA), Gly-265, Lys-281, and 294 to 297 (RRNS) contribute to the succinyl-CoA site.

The protein belongs to the type 2 tetrahydrodipicolinate N-succinyltransferase family. Homotrimer.

It localises to the cytoplasm. It carries out the reaction (S)-2,3,4,5-tetrahydrodipicolinate + succinyl-CoA + H2O = (S)-2-succinylamino-6-oxoheptanedioate + CoA. Its pathway is amino-acid biosynthesis; L-lysine biosynthesis via DAP pathway; LL-2,6-diaminopimelate from (S)-tetrahydrodipicolinate (succinylase route): step 1/3. Its function is as follows. Catalyzes the conversion of the cyclic tetrahydrodipicolinate (THDP) into the acyclic N-succinyl-L-2-amino-6-oxopimelate using succinyl-CoA. The sequence is that of 2,3,4,5-tetrahydropyridine-2,6-dicarboxylate N-succinyltransferase from Micrococcus luteus (strain ATCC 4698 / DSM 20030 / JCM 1464 / CCM 169 / CCUG 5858 / IAM 1056 / NBRC 3333 / NCIMB 9278 / NCTC 2665 / VKM Ac-2230) (Micrococcus lysodeikticus).